The chain runs to 310 residues: D-alanine--D-alanine ligase (310 aa).

An ATP-grasp domain is found at 107 to 302; that stretch reads KQAFQAARLT…FEDLVERILA (196 aa). ATP is bound at residue 135–188; it reads EFSLPVVVKPSQEGSSVGVSIVKKESEFAAAMKEAFRYDREILVEQFIKGSEVQ. Residues D256, E269, and N271 each contribute to the Mg(2+) site.

This sequence belongs to the D-alanine--D-alanine ligase family. Mg(2+) serves as cofactor. The cofactor is Mn(2+).

The protein localises to the cytoplasm. The catalysed reaction is 2 D-alanine + ATP = D-alanyl-D-alanine + ADP + phosphate + H(+). Its pathway is cell wall biogenesis; peptidoglycan biosynthesis. Functionally, cell wall formation. This chain is D-alanine--D-alanine ligase, found in Geotalea uraniireducens (strain Rf4) (Geobacter uraniireducens).